We begin with the raw amino-acid sequence, 103 residues long: N(4)-acetylcytidine amidohydrolase (103 aa).

Residues 6–101 (ITFFQRFQDD…QTQFYVIEFK (96 aa)) form the ASCH domain. The active-site Proton acceptor is Lys-21. Thr-24 (nucleophile) is an active-site residue. The active-site Proton donor is the Glu-74.

The protein belongs to the N(4)-acetylcytidine amidohydrolase family.

It carries out the reaction N(4)-acetylcytidine + H2O = cytidine + acetate + H(+). It catalyses the reaction N(4)-acetyl-2'-deoxycytidine + H2O = 2'-deoxycytidine + acetate + H(+). The catalysed reaction is N(4)-acetylcytosine + H2O = cytosine + acetate + H(+). Its function is as follows. Catalyzes the hydrolysis of N(4)-acetylcytidine (ac4C). This is N(4)-acetylcytidine amidohydrolase (yqfB) from Escherichia coli O81 (strain ED1a).